The primary structure comprises 506 residues: Histidine ammonia-lyase (506 aa).

Residues 144–146 constitute a cross-link (5-imidazolinone (Ala-Gly)); the sequence is ASG. S145 carries the post-translational modification 2,3-didehydroalanine (Ser).

Belongs to the PAL/histidase family. Post-translationally, contains an active site 4-methylidene-imidazol-5-one (MIO), which is formed autocatalytically by cyclization and dehydration of residues Ala-Ser-Gly.

It is found in the cytoplasm. The catalysed reaction is L-histidine = trans-urocanate + NH4(+). The protein operates within amino-acid degradation; L-histidine degradation into L-glutamate; N-formimidoyl-L-glutamate from L-histidine: step 1/3. In Legionella pneumophila (strain Lens), this protein is Histidine ammonia-lyase.